Consider the following 466-residue polypeptide: Ribulose bisphosphate carboxylase large chain (466 aa).

Lys5 bears the N6,N6,N6-trimethyllysine mark. 2 residues coordinate substrate: Asn114 and Thr164. The active-site Proton acceptor is Lys166. Substrate is bound at residue Lys168. Residues Lys192, Asp194, and Glu195 each coordinate Mg(2+). Lys192 carries the post-translational modification N6-carboxylysine. His285 functions as the Proton acceptor in the catalytic mechanism. Substrate is bound by residues Arg286, His318, and Ser370.

The protein belongs to the RuBisCO large chain family. Type I subfamily. As to quaternary structure, heterohexadecamer of 8 large chains and 8 small chains; disulfide-linked. The disulfide link is formed within the large subunit homodimers. The cofactor is Mg(2+). Post-translationally, the disulfide bond which can form in the large chain dimeric partners within the hexadecamer appears to be associated with oxidative stress and protein turnover.

The protein resides in the plastid. Its subcellular location is the chloroplast. It carries out the reaction 2 (2R)-3-phosphoglycerate + 2 H(+) = D-ribulose 1,5-bisphosphate + CO2 + H2O. It catalyses the reaction D-ribulose 1,5-bisphosphate + O2 = 2-phosphoglycolate + (2R)-3-phosphoglycerate + 2 H(+). RuBisCO catalyzes two reactions: the carboxylation of D-ribulose 1,5-bisphosphate, the primary event in carbon dioxide fixation, as well as the oxidative fragmentation of the pentose substrate in the photorespiration process. Both reactions occur simultaneously and in competition at the same active site. The sequence is that of Ribulose bisphosphate carboxylase large chain from Coriaria myrtifolia (Tanner's sumac).